The chain runs to 372 residues: N-methyl-L-tryptophan oxidase (372 aa).

FAD is bound at residue 4 to 34 (DLIIIGSGSVGAAAGYYATRAGLKVLMTDAH). Cysteine 307 bears the S-8alpha-FAD cysteine mark.

It belongs to the MSOX/MTOX family. MTOX subfamily. In terms of assembly, monomer. It depends on FAD as a cofactor.

The catalysed reaction is N(alpha)-methyl-L-tryptophan + O2 + H2O = L-tryptophan + formaldehyde + H2O2. In terms of biological role, catalyzes the oxidative demethylation of N-methyl-L-tryptophan. The sequence is that of N-methyl-L-tryptophan oxidase from Salmonella typhi.